An 802-amino-acid polypeptide reads, in one-letter code: Serine/threonine-protein kinase zyg-8 (802 aa).

The span at Met1–Thr13 shows a compositional bias: polar residues. A disordered region spans residues Met1–Arg102. The segment covering Arg15–Gly24 has biased composition (pro residues). Over residues Ser89 to Ser99 the composition is skewed to low complexity. Doublecortin domains lie at Lys211–Ser298 and Arg340–Leu423. Residues His430–Asp470 form a disordered region. Residues Gly434–Asn454 are compositionally biased toward low complexity. The region spanning Phe482–Met743 is the Protein kinase domain. Residues Ile488–Val496 and Lys512 each bind ATP. Asp604 acts as the Proton acceptor in catalysis.

This sequence belongs to the protein kinase superfamily. CAMK Ser/Thr protein kinase family. CaMK subfamily. As to quaternary structure, interacts with tac-1. In terms of tissue distribution, expressed in AFD thermosensory neurons. Expressed in cells near the nerve ring, in motor neurons in the ventral nerve cord and in the six touch receptor neurons including ALML/R, PLML/R and AVM and PVM. Expressed in hypodermal and neural tissues and in the germline.

It is found in the cytoplasm. Its subcellular location is the cytoskeleton. The protein resides in the microtubule organizing center. It localises to the centrosome. The protein localises to the spindle. It carries out the reaction L-seryl-[protein] + ATP = O-phospho-L-seryl-[protein] + ADP + H(+). It catalyses the reaction L-threonyl-[protein] + ATP = O-phospho-L-threonyl-[protein] + ADP + H(+). Functionally, probable kinase. Kinase activity may be involved in positioning of spindle poles in meiosis and mitosis. Plays a role in spindle positioning during asymmetric division of one-cell stage embryos. Affects spindle position by promoting microtubule assembly during anaphase. Plays a role in the assembly and stability of oocyte spindle, perhaps balancing the forces in the spindle and maintaining their morphology during metaphase. Plays a role in cell division and in embryonic viability up until gastrulation. Required for neuronal morphology and polarity and restricting ectopic process outgrowth; probably as a result of a role in maintaining microtubule integrity. Involved in maintaining neuronal microtubule number, length and packing. May promote axonal and synaptic growth. Plays a role in regulating thermotaxis responses in AFD thermosensory neurons. Required for touch sensitivity in adult touch response receptor neurons. In Caenorhabditis elegans, this protein is Serine/threonine-protein kinase zyg-8.